The primary structure comprises 150 residues: Small ribosomal subunit protein uS13 (150 aa).

This sequence belongs to the universal ribosomal protein uS13 family. In terms of assembly, part of the 30S ribosomal subunit. Forms a loose heterodimer with protein S19. Forms two bridges to the 50S subunit in the 70S ribosome.

Located at the top of the head of the 30S subunit, it contacts several helices of the 16S rRNA. In the 70S ribosome it contacts the 23S rRNA (bridge B1a) and protein L5 of the 50S subunit (bridge B1b), connecting the 2 subunits; these bridges are implicated in subunit movement. The polypeptide is Small ribosomal subunit protein uS13 (Methanocorpusculum labreanum (strain ATCC 43576 / DSM 4855 / Z)).